A 148-amino-acid chain; its full sequence is MAGIIFDDMFSVKSVDPDGKKFDRVSRYFCDAESFKMELIIDINSQIYPLKQNDKFRLVLATTLREDGLADEGEYDPKAEYPRIKQYEYVMYGKVYRLEDDDSGTDGGQLAAYASFGGLLMRLKGEAINLHGFEVDMNLYLLMKKTDF.

Residues 16-40 (DPDGKKFDRVSRYFCDAESFKMELI) are non-specific ssDNA binding.

Belongs to the eukaryotic RPB8 RNA polymerase subunit family. Component of the RNA polymerase I (Pol I), RNA polymerase II (Pol II) and RNA polymerase III (Pol III) complexes consisting of at least 13, 12 and 17 subunits, respectively. Directly interacts with POLR2A.

Its subcellular location is the nucleus. DNA-dependent RNA polymerase catalyzes the transcription of DNA into RNA using the four ribonucleoside triphosphates as substrates. Common component of RNA polymerases I, II and III which synthesize ribosomal RNA precursors, mRNA precursors and many functional non-coding RNAs, and small RNAs, such as 5S rRNA and tRNAs, respectively. In Caenorhabditis briggsae, this protein is Probable DNA-directed RNA polymerases I, II, and III subunit RPABC3.